A 671-amino-acid chain; its full sequence is MMFTRAQVRKQKTSNSSSQRPRSSGGSTRHETRYKQSSTSSSGAGSGLSGASGASGARRDQYRDRDHYGKHSFELPRQHSKEEAYHRDRESSAGGVDRGERSGIGGNGGGVTGGGVYVDRRTRPRSITNRRGAIKHQKTHDINGHRFVAKFFRQPTFCAFCNLFLWGFGKQGYQCIICQTVVHKKCHDKLLGKCSGSVFTSASTILLRERFKIDMPHRFKPHTFMSPTFCDHCGSLMGGFFIQGLKCEECDVNCHKKCERLTANLCGVNQKLIVEALNHVKRGAREARDSPSTPPSLNPAYKIEASEEHDETSYTYSQFQKSGRFTAPATVIPRFKNYSVDDFHFLAVLGKGSFGKVLLAELRDTTYYYAIKCLKKDVVLEDDDVDSTLIERKVLALGTKHPYLCHLFCTFQTESHLFFVMEYLNGGDLMFHIQESGRFSEERARFYGAEIISGLKFLHKKGIIYRDLKLDNVLLDYEGHVRIADFGMCKLQIYLDKTADSFCGTPDYMAPEIIKGEKYNQNVDWWSFGVLLYEMLIGQSPFSGCDEDELFWSICNEIPWFPVYISAEATGILKGLLEKDYTKRIGSQYSPAGDIADHIFFRPIDWGLLEKRQIEPPFKPQVKHPLDTQYFDRVFTRERVRLTPIDKEILASMDQKQFHGFTYTNPHITLD.

The interval 1–136 (MMFTRAQVRK…ITNRRGAIKH (136 aa)) is disordered. The span at 14-27 (SNSSSQRPRSSGGS) shows a compositional bias: low complexity. Positions 57–101 (ARRDQYRDRDHYGKHSFELPRQHSKEEAYHRDRESSAGGVDRGER) are enriched in basic and acidic residues. Residues 102–116 (SGIGGNGGGVTGGGV) are compositionally biased toward gly residues. Phorbol-ester/DAG-type zinc fingers lie at residues 144 to 194 (GHRF…LGKC) and 216 to 266 (PHRF…ANLC). One can recognise a Protein kinase domain in the interval 343 to 601 (FHFLAVLGKG…AGDIADHIFF (259 aa)). Residues 349-357 (LGKGSFGKV) and K372 each bind ATP. The Proton acceptor role is filled by D467. In terms of domain architecture, AGC-kinase C-terminal spans 602 to 671 (RPIDWGLLEK…TYTNPHITLD (70 aa)).

The protein belongs to the protein kinase superfamily. AGC Ser/Thr protein kinase family. PKC subfamily.

It carries out the reaction L-seryl-[protein] + ATP = O-phospho-L-seryl-[protein] + ADP + H(+). The catalysed reaction is L-threonyl-[protein] + ATP = O-phospho-L-threonyl-[protein] + ADP + H(+). This chain is Putative protein kinase C delta type homolog, found in Drosophila melanogaster (Fruit fly).